A 467-amino-acid polypeptide reads, in one-letter code: ATP synthase subunit beta (467 aa).

156–163 provides a ligand contact to ATP; sequence GGAGVGKT.

Belongs to the ATPase alpha/beta chains family. As to quaternary structure, F-type ATPases have 2 components, CF(1) - the catalytic core - and CF(0) - the membrane proton channel. CF(1) has five subunits: alpha(3), beta(3), gamma(1), delta(1), epsilon(1). CF(0) has three main subunits: a(1), b(2) and c(9-12). The alpha and beta chains form an alternating ring which encloses part of the gamma chain. CF(1) is attached to CF(0) by a central stalk formed by the gamma and epsilon chains, while a peripheral stalk is formed by the delta and b chains.

It localises to the cell inner membrane. It catalyses the reaction ATP + H2O + 4 H(+)(in) = ADP + phosphate + 5 H(+)(out). In terms of biological role, produces ATP from ADP in the presence of a proton gradient across the membrane. The catalytic sites are hosted primarily by the beta subunits. This is ATP synthase subunit beta from Cupriavidus pinatubonensis (strain JMP 134 / LMG 1197) (Cupriavidus necator (strain JMP 134)).